The chain runs to 161 residues: DNA endonuclease I-CvuI (161 aa).

It belongs to the LAGLIDADG endonuclease family.

It localises to the plastid. The protein resides in the chloroplast. Functionally, probable endonuclease involved in intron homing. The chain is DNA endonuclease I-CvuI from Chlorella vulgaris (Green alga).